The primary structure comprises 263 residues: Thiazole synthase (263 aa).

The Schiff-base intermediate with DXP role is filled by Lys100. 1-deoxy-D-xylulose 5-phosphate is bound by residues Gly161, 187 to 188, and 209 to 210; these read AG and NT.

The protein belongs to the ThiG family. As to quaternary structure, homotetramer. Forms heterodimers with either ThiH or ThiS.

It localises to the cytoplasm. The catalysed reaction is [ThiS sulfur-carrier protein]-C-terminal-Gly-aminoethanethioate + 2-iminoacetate + 1-deoxy-D-xylulose 5-phosphate = [ThiS sulfur-carrier protein]-C-terminal Gly-Gly + 2-[(2R,5Z)-2-carboxy-4-methylthiazol-5(2H)-ylidene]ethyl phosphate + 2 H2O + H(+). The protein operates within cofactor biosynthesis; thiamine diphosphate biosynthesis. Catalyzes the rearrangement of 1-deoxy-D-xylulose 5-phosphate (DXP) to produce the thiazole phosphate moiety of thiamine. Sulfur is provided by the thiocarboxylate moiety of the carrier protein ThiS. In vitro, sulfur can be provided by H(2)S. The sequence is that of Thiazole synthase from Shouchella clausii (strain KSM-K16) (Alkalihalobacillus clausii).